Reading from the N-terminus, the 67-residue chain is Conotoxin ArMLKM-01 (67 aa).

Residues 1–24 (MLKMEVVLFTFLVLFPLSTLQLET) form the signal peptide. A propeptide spanning residues 25 to 51 (DQPVERYVENKQDLNPDESRNFMLPIV) is cleaved from the precursor. 3 disulfide bridges follow: Cys-54–Cys-65, Cys-55–Cys-63, and Cys-58–Cys-66.

Belongs to the conotoxin M superfamily. In terms of tissue distribution, expressed by the venom duct.

The protein resides in the secreted. The protein is Conotoxin ArMLKM-01 of Conus arenatus (Sand-dusted cone).